Here is a 242-residue protein sequence, read N- to C-terminus: Probable 2-phosphosulfolactate phosphatase (242 aa).

The protein belongs to the ComB family. Requires Mg(2+) as cofactor.

It carries out the reaction (2R)-O-phospho-3-sulfolactate + H2O = (2R)-3-sulfolactate + phosphate. This is Probable 2-phosphosulfolactate phosphatase from Picosynechococcus sp. (strain ATCC 27264 / PCC 7002 / PR-6) (Agmenellum quadruplicatum).